A 335-amino-acid chain; its full sequence is UPF0353 protein MT1528 (335 aa).

Helical transmembrane passes span tryptophan 18–leucine 38 and valine 67–threonine 87. In terms of domain architecture, VWFA spans valine 98–leucine 294. A helical membrane pass occupies residues valine 309–isoleucine 329.

The protein belongs to the UPF0353 family.

Its subcellular location is the cell membrane. The polypeptide is UPF0353 protein MT1528 (Mycobacterium tuberculosis (strain CDC 1551 / Oshkosh)).